A 306-amino-acid chain; its full sequence is Pantothenate synthetase (306 aa).

Residue 37–44 (MGALHEGH) participates in ATP binding. Histidine 44 acts as the Proton donor in catalysis. Glutamine 69 contributes to the (R)-pantoate binding site. Glutamine 69 is a beta-alanine binding site. 155–158 (GEKD) contributes to the ATP binding site. Glutamine 161 is a binding site for (R)-pantoate. Residues valine 184 and 192 to 195 (KSSR) each bind ATP.

This sequence belongs to the pantothenate synthetase family. Homodimer.

The protein localises to the cytoplasm. It carries out the reaction (R)-pantoate + beta-alanine + ATP = (R)-pantothenate + AMP + diphosphate + H(+). It functions in the pathway cofactor biosynthesis; (R)-pantothenate biosynthesis; (R)-pantothenate from (R)-pantoate and beta-alanine: step 1/1. Its function is as follows. Catalyzes the condensation of pantoate with beta-alanine in an ATP-dependent reaction via a pantoyl-adenylate intermediate. The chain is Pantothenate synthetase from Corynebacterium jeikeium (strain K411).